The chain runs to 297 residues: TGF-beta receptor type-2 (297 aa).

The N-terminal stretch at 1 to 23 (MGRGLLGGLWPLHVVLWTRIAST) is a signal peptide. At 24-166 (IPPHVPKSVN…NPDLLLVIFQ (143 aa)) the chain is on the extracellular side. Intrachain disulfides connect Cys-51/Cys-84, Cys-54/Cys-71, Cys-61/Cys-67, Cys-77/Cys-101, Cys-121/Cys-136, and Cys-138/Cys-143. N-linked (GlcNAc...) asparagine glycosylation is found at Asn-70 and Asn-94. Residues 167–187 (VTGVSLLPPLGIAIAVIITFY) traverse the membrane as a helical segment. Over 188 to 297 (CYRVHRQQKL…KTEKDIFSDL (110 aa)) the chain is Cytoplasmic. The Protein kinase domain occupies 244–297 (IELDTLVGKGRFAEVYKAKLRQNTSEQFETVAVKIFPYEEYASWKTEKDIFSDL). ATP-binding positions include 250-258 (VGKGRFAEV) and Lys-277.

The protein belongs to the protein kinase superfamily. TKL Ser/Thr protein kinase family. TGFB receptor subfamily. In terms of assembly, homodimer. Heterohexamer; TGFB1, TGFB2 and TGFB3 homodimeric ligands assemble a functional receptor composed of two TGFBR1 and TGFBR2 heterodimers to form a ligand-receptor heterohexamer. The respective affinity of TGFRB1 and TGFRB2 for the ligands may modulate the kinetics of assembly of the receptor and may explain the different biological activities of TGFB1, TGFB2 and TGFB3. Component of a complex composed of TSC22D1 (via N-terminus), TGFBR1 and TGFBR2; the interaction between TSC22D1 and TGFBR1 is inhibited by SMAD7 and promoted by TGFB1. Interacts with DAXX. Interacts with DYNLT4. Interacts with ZFYVE9; ZFYVE9 recruits SMAD2 and SMAD3 to the TGF-beta receptor. Interacts with and is activated by SCUBE3; this interaction does not affect TGFB1-binding to TGFBR2. Interacts with VPS39; this interaction is independent of the receptor kinase activity and of the presence of TGF-beta. Interacts with CLU. Mg(2+) is required as a cofactor. The cofactor is Mn(2+). In terms of processing, phosphorylated on a Ser/Thr residue in the cytoplasmic domain.

Its subcellular location is the cell membrane. The protein resides in the membrane raft. The catalysed reaction is L-threonyl-[receptor-protein] + ATP = O-phospho-L-threonyl-[receptor-protein] + ADP + H(+). The enzyme catalyses L-seryl-[receptor-protein] + ATP = O-phospho-L-seryl-[receptor-protein] + ADP + H(+). Transmembrane serine/threonine kinase forming with the TGF-beta type I serine/threonine kinase receptor, TGFBR1, the non-promiscuous receptor for the TGF-beta cytokines TGFB1, TGFB2 and TGFB3. Transduces the TGFB1, TGFB2 and TGFB3 signal from the cell surface to the cytoplasm and is thus regulating a plethora of physiological and pathological processes including cell cycle arrest in epithelial and hematopoietic cells, control of mesenchymal cell proliferation and differentiation, wound healing, extracellular matrix production, immunosuppression and carcinogenesis. The formation of the receptor complex composed of 2 TGFBR1 and 2 TGFBR2 molecules symmetrically bound to the cytokine dimer results in the phosphorylation and the activation of TGFRB1 by the constitutively active TGFBR2. Activated TGFBR1 phosphorylates SMAD2 which dissociates from the receptor and interacts with SMAD4. The SMAD2-SMAD4 complex is subsequently translocated to the nucleus where it modulates the transcription of the TGF-beta-regulated genes. This constitutes the canonical SMAD-dependent TGF-beta signaling cascade. Also involved in non-canonical, SMAD-independent TGF-beta signaling pathways. The protein is TGF-beta receptor type-2 (TGFBR2) of Sus scrofa (Pig).